Here is a 449-residue protein sequence, read N- to C-terminus: tRNA-2-methylthio-N(6)-dimethylallyladenosine synthase (449 aa).

Residues 2-119 (KGLFIRTYGC…LPEMIARASR (118 aa)) enclose the MTTase N-terminal domain. The [4Fe-4S] cluster site is built by C11, C47, C82, C157, C161, and C164. The Radical SAM core domain maps to 143-378 (EADGPAAFVS…QALLREQQTE (236 aa)). Positions 381–443 (ASQIGKTLPV…LNSLTGELVR (63 aa)) constitute a TRAM domain.

Belongs to the methylthiotransferase family. MiaB subfamily. Monomer. Requires [4Fe-4S] cluster as cofactor.

It localises to the cytoplasm. It catalyses the reaction N(6)-dimethylallyladenosine(37) in tRNA + (sulfur carrier)-SH + AH2 + 2 S-adenosyl-L-methionine = 2-methylsulfanyl-N(6)-dimethylallyladenosine(37) in tRNA + (sulfur carrier)-H + 5'-deoxyadenosine + L-methionine + A + S-adenosyl-L-homocysteine + 2 H(+). In terms of biological role, catalyzes the methylthiolation of N6-(dimethylallyl)adenosine (i(6)A), leading to the formation of 2-methylthio-N6-(dimethylallyl)adenosine (ms(2)i(6)A) at position 37 in tRNAs that read codons beginning with uridine. This chain is tRNA-2-methylthio-N(6)-dimethylallyladenosine synthase, found in Hyphomonas neptunium (strain ATCC 15444).